Consider the following 453-residue polypeptide: tRNA-2-methylthio-N(6)-dimethylallyladenosine synthase (453 aa).

Residues 11–131 enclose the MTTase N-terminal domain; that stretch reads KSFHVKSFGC…LPQLVADAAE (121 aa). The [4Fe-4S] cluster site is built by Cys20, Cys56, Cys94, Cys167, Cys171, and Cys174. In terms of domain architecture, Radical SAM core spans 153 to 385; it reads RRQGPTAFLT…QALLNEQQHR (233 aa). A TRAM domain is found at 388–449; it reads LATVGKRCEV…PNSLSGALVE (62 aa).

This sequence belongs to the methylthiotransferase family. MiaB subfamily. In terms of assembly, monomer. The cofactor is [4Fe-4S] cluster.

The protein resides in the cytoplasm. It carries out the reaction N(6)-dimethylallyladenosine(37) in tRNA + (sulfur carrier)-SH + AH2 + 2 S-adenosyl-L-methionine = 2-methylsulfanyl-N(6)-dimethylallyladenosine(37) in tRNA + (sulfur carrier)-H + 5'-deoxyadenosine + L-methionine + A + S-adenosyl-L-homocysteine + 2 H(+). Functionally, catalyzes the methylthiolation of N6-(dimethylallyl)adenosine (i(6)A), leading to the formation of 2-methylthio-N6-(dimethylallyl)adenosine (ms(2)i(6)A) at position 37 in tRNAs that read codons beginning with uridine. In Rhizorhabdus wittichii (strain DSM 6014 / CCUG 31198 / JCM 15750 / NBRC 105917 / EY 4224 / RW1) (Sphingomonas wittichii), this protein is tRNA-2-methylthio-N(6)-dimethylallyladenosine synthase.